Consider the following 331-residue polypeptide: Ribosomal RNA small subunit methyltransferase H (331 aa).

Residues G56–H58, D76, F100, D122, and Q129 contribute to the S-adenosyl-L-methionine site.

This sequence belongs to the methyltransferase superfamily. RsmH family.

It is found in the cytoplasm. It catalyses the reaction cytidine(1402) in 16S rRNA + S-adenosyl-L-methionine = N(4)-methylcytidine(1402) in 16S rRNA + S-adenosyl-L-homocysteine + H(+). In terms of biological role, specifically methylates the N4 position of cytidine in position 1402 (C1402) of 16S rRNA. This Chromohalobacter salexigens (strain ATCC BAA-138 / DSM 3043 / CIP 106854 / NCIMB 13768 / 1H11) protein is Ribosomal RNA small subunit methyltransferase H.